The primary structure comprises 149 residues: Large ribosomal subunit protein uL13 (149 aa).

The protein belongs to the universal ribosomal protein uL13 family. In terms of assembly, part of the 50S ribosomal subunit.

In terms of biological role, this protein is one of the early assembly proteins of the 50S ribosomal subunit, although it is not seen to bind rRNA by itself. It is important during the early stages of 50S assembly. This is Large ribosomal subunit protein uL13 from Borrelia duttonii (strain Ly).